The chain runs to 154 residues: Large ribosomal subunit protein uL13 (154 aa).

A disordered region spans residues 131 to 154 (DHKHEAQQPEVVDFKSMNSKNTRG).

This sequence belongs to the universal ribosomal protein uL13 family. Part of the 50S ribosomal subunit.

In terms of biological role, this protein is one of the early assembly proteins of the 50S ribosomal subunit, although it is not seen to bind rRNA by itself. It is important during the early stages of 50S assembly. This Maricaulis maris (strain MCS10) (Caulobacter maris) protein is Large ribosomal subunit protein uL13.